Reading from the N-terminus, the 257-residue chain is Acetylglutamate kinase (257 aa).

Substrate-binding positions include 43 to 44 (GG), R65, and N157. ATP contacts are provided by residues 180-185 (DVSGIL) and 208-210 (IIT).

The protein belongs to the acetylglutamate kinase family. ArgB subfamily. In terms of assembly, homodimer.

The protein resides in the cytoplasm. The catalysed reaction is N-acetyl-L-glutamate + ATP = N-acetyl-L-glutamyl 5-phosphate + ADP. It participates in amino-acid biosynthesis; L-arginine biosynthesis; N(2)-acetyl-L-ornithine from L-glutamate: step 2/4. Functionally, catalyzes the ATP-dependent phosphorylation of N-acetyl-L-glutamate. The polypeptide is Acetylglutamate kinase (Edwardsiella ictaluri (strain 93-146)).